The following is a 502-amino-acid chain: MNKSLVAVGVIVALGVVWTGGAWYTGKKIETHLEDMVAQANAQLKLTAPESNLEVSYQNYHRGVFSSQLQLLVKPIAGKENPWIKSGQSVIFNESVDHGPFPLAQLKKLNLIPSMASIQTTLVNNEVSKPLFDMAKGETPFEINSRIGYSGDSSSDISLKPLNYEQKDEKVAFSGGEFQLNADRDGKAISLSGEAQSGRIDAVNEYNQKVQLTFNNLKTDGSSTLASFGERVGNQKLSLEKMTISVEGKELALLEGMEISGKSDLVNDGKTINSQLDYSLNSLKVQNQDLGSGKLTLKVGQIDGEAWHQFSQQYNAQTQALLAQPEIANNPELYQEKVTEAFFSALPLMLKGDPVITIAPLSWKNSQGESALNLSLFLKDPATTKEAPQTLAQEVDRSVKSLDAKLTIPVDMATEFMTQVAKLEGYQEDQAKKLAKQQVEGASAMGQMFRLTTLQDNTITTSLQYANGQITLNGQKMSLEDFVGMFAMPALNVPAVPAIPQQ.

The signal sequence occupies residues 1-19 (MNKSLVAVGVIVALGVVWT).

The protein to E.coli YihF and H.influenzae HI_1236. As to quaternary structure, homodimer.

It localises to the cell inner membrane. This chain is Protein YdgA (ydgA), found in Escherichia coli (strain K12).